The following is a 556-amino-acid chain: uncharacterized protein (556 aa).

Residues 69–129 are disordered; sequence RRGHTSGHAS…SSARSSSTSG (61 aa). Low complexity-rich tracts occupy residues 74–85 and 93–129; these read SGHASEHTSSSR and SMSS…STSG. Residues 379-399 form a helical membrane-spanning segment; the sequence is LGLYIFIGVLLGLIGVIGLFI. The RING-type; atypical zinc finger occupies 498–541; the sequence is CTICLCEYSEESPLYRELPCHHIFHPACIDPYLLKNSDLCPLCK.

The protein localises to the vacuole membrane. Its subcellular location is the cell membrane. This is an uncharacterized protein from Schizosaccharomyces pombe (strain 972 / ATCC 24843) (Fission yeast).